A 97-amino-acid chain; its full sequence is Large ribosomal subunit protein bL27 (97 aa).

Positions 1-12 are excised as a propeptide; that stretch reads MLKMNLANLQLF. The interval 14 to 37 is disordered; that stretch reads HKKGGGSTSNGRDSQAKRLGAKAA.

This sequence belongs to the bacterial ribosomal protein bL27 family. In terms of processing, the N-terminus is cleaved by ribosomal processing cysteine protease Prp.

The sequence is that of Large ribosomal subunit protein bL27 from Streptococcus uberis (strain ATCC BAA-854 / 0140J).